A 353-amino-acid chain; its full sequence is Methylthioribose-1-phosphate isomerase (353 aa).

Substrate-binding positions include Arg-51–Ala-53, Arg-94, and Gln-199. Catalysis depends on Asp-240, which acts as the Proton donor. Asn-250–Lys-251 provides a ligand contact to substrate.

It belongs to the eIF-2B alpha/beta/delta subunits family. MtnA subfamily. Homodimer.

The enzyme catalyses 5-(methylsulfanyl)-alpha-D-ribose 1-phosphate = 5-(methylsulfanyl)-D-ribulose 1-phosphate. Its pathway is amino-acid biosynthesis; L-methionine biosynthesis via salvage pathway; L-methionine from S-methyl-5-thio-alpha-D-ribose 1-phosphate: step 1/6. Its function is as follows. Catalyzes the interconversion of methylthioribose-1-phosphate (MTR-1-P) into methylthioribulose-1-phosphate (MTRu-1-P). The polypeptide is Methylthioribose-1-phosphate isomerase (Bacillus velezensis (strain DSM 23117 / BGSC 10A6 / LMG 26770 / FZB42) (Bacillus amyloliquefaciens subsp. plantarum)).